A 133-amino-acid chain; its full sequence is Small ribosomal subunit protein eS8 (133 aa).

Residues methionine 1 to proline 31 are disordered.

The protein belongs to the eukaryotic ribosomal protein eS8 family. Part of the 30S ribosomal subunit.

This is Small ribosomal subunit protein eS8 from Saccharolobus solfataricus (strain ATCC 35092 / DSM 1617 / JCM 11322 / P2) (Sulfolobus solfataricus).